The sequence spans 310 residues: tRNA dimethylallyltransferase (310 aa).

Residue 14-21 (GPTASGKS) participates in ATP binding. Substrate is bound at residue 16–21 (TASGKS). Interaction with substrate tRNA stretches follow at residues 39–42 (DSMQ) and 163–167 (QRIVR).

It belongs to the IPP transferase family. In terms of assembly, monomer. It depends on Mg(2+) as a cofactor.

The catalysed reaction is adenosine(37) in tRNA + dimethylallyl diphosphate = N(6)-dimethylallyladenosine(37) in tRNA + diphosphate. Catalyzes the transfer of a dimethylallyl group onto the adenine at position 37 in tRNAs that read codons beginning with uridine, leading to the formation of N6-(dimethylallyl)adenosine (i(6)A). This is tRNA dimethylallyltransferase from Brucella abortus (strain S19).